Reading from the N-terminus, the 403-residue chain is S-adenosylmethionine synthase (403 aa).

An ATP-binding site is contributed by 141–146 (GQGSVD).

It belongs to the AdoMet synthase 2 family. Mg(2+) serves as cofactor.

The catalysed reaction is L-methionine + ATP + H2O = S-adenosyl-L-methionine + phosphate + diphosphate. Its pathway is amino-acid biosynthesis; S-adenosyl-L-methionine biosynthesis; S-adenosyl-L-methionine from L-methionine: step 1/1. Its function is as follows. Catalyzes the formation of S-adenosylmethionine from methionine and ATP. This is S-adenosylmethionine synthase from Methanococcus aeolicus (strain ATCC BAA-1280 / DSM 17508 / OCM 812 / Nankai-3).